Consider the following 123-residue polypeptide: Small ribosomal subunit protein bS16 (123 aa).

Positions 87 to 123 are disordered; sequence VKNNPVKAKPGKRAQERAAEKAQKVADAAAAAADAAE. Residues 99-110 show a composition bias toward basic and acidic residues; the sequence is RAQERAAEKAQK. Low complexity predominate over residues 111–123; that stretch reads VADAAAAAADAAE.

It belongs to the bacterial ribosomal protein bS16 family.

In Rhizobium johnstonii (strain DSM 114642 / LMG 32736 / 3841) (Rhizobium leguminosarum bv. viciae), this protein is Small ribosomal subunit protein bS16.